Reading from the N-terminus, the 186-residue chain is Elongation factor P (186 aa).

It belongs to the elongation factor P family.

Its subcellular location is the cytoplasm. Its pathway is protein biosynthesis; polypeptide chain elongation. Involved in peptide bond synthesis. Stimulates efficient translation and peptide-bond synthesis on native or reconstituted 70S ribosomes in vitro. Probably functions indirectly by altering the affinity of the ribosome for aminoacyl-tRNA, thus increasing their reactivity as acceptors for peptidyl transferase. The sequence is that of Elongation factor P from Thiobacillus denitrificans (strain ATCC 25259 / T1).